The sequence spans 1543 residues: MDEFCNSTFWNLSLLKSPEADLPLCFEQTVLVWIPLGFLWLLAPWQLYRIYRSRTKRFAITKFYLAKQVFVVCLLILAAIDLSLALTEDTGQATIPPVKYTNPILYLCTWLLVLVIQHCRQCCIQKNSWFLSMFWILSLLCGIFQFQTLIRALLQDSKSNMTYSCLFFVSYGFQIVILILSAFSESSDSTHAPSATASFLSSVTFSWYDSTVLKGYKHPLTIEDVWDIEENLKAKSLTSKFKTIMTKDLQKARQALQRRLKKSQQSPEGTSHGLTKKQSQSQDVLVLEDSKKKKKKSEATKDFPKSWLVKALFKTFYVVILKSFILKLAHDILLFLNPQLLKFLIGFVKDPDSYPWVGYIYAILMFSVTLIQSFFLQCYFQFCFVLGMTVRTTIIASVYKKALTLSNLARRQYTIGETVNLMSVDSQKLMDVTNYIHLLWSSVLQIALSIFFLWRELGPSILAGVGLMVLLVPVNGVLATKIRKIQVQNMKNKDKRLKIMNEILSGIKILKYFAWEPSFKEQVNSIRKKELRNLLRFSQLQTILIFILHLTPTLVSVITFSVYVLVDSQNVLNAEKAFTSITLFNILRFPLAMLPMVISSVIQASVSVDRLEQYLGSDDLDLSAIRHVCHFDKAVQFSEASFTWDRDLEATIQDVNLDIKPGQLVAVVGTVGSGKSSLISAMLGEMENVHGHITIKGSIAYVPQQAWIQNGTIKDNILFGSEYDEKKYQRVIEACALLPDLEMLPGGDMAEIGEKGINLSGGQKHRVSLARATYQDADIYILDDPLSAVDTHVGKHIFNKVVGPNGLLSGKTRILVTHGIHFLPQVDEIVVLGKGTILEKGSYSDLMDKKGVFAKNWKTFMKHSGPEGEATVDNDSEEEDGDCGLIPTVEEIPDDAASLTMRRENSLRRTLSRSSRSGSRRGKSLKSSLKIKSVNALNKKEEVVKGQKLIKKEFVETGKVKFSIYLKYLQAVGWWSLLFIVIFYVLNYVAFIGTNLWLSAWTSDSEKQNGTDNSPSQRDMRIGVFGALGIAQGIFLLSSSLWSIYACRNASKTLHRQLLTNILRAPMSFFDTTPTGRIVNRFAGDISTVDDTLPQTLRSWLLCFFGIVSTLVMICMATPIFIIIIIPLSILYVSVQVFYVATSRQLRRLDSVTKSPIYSHFSETVSGLPVIRAFEHQQRFLANSEKQIDTNQKCVFSWITSNRWLAIRLELVGNLIVFCSALLLVIYKNSLTGDTVGFVLSNALNITQTLNWLVRMTSEVETNIVAVERINEYINVDNEAPWVTDKKPPADWPKKGEIQFNNYQVRYRPELDLVLKGITCNIKSTEKVGVVGRTGAGKSSLTNCLFRILESAGGQIIIDGIDIASIGLHDLRGRLTIIPQDPILFSGNLRMNLDPFNKYSDEEIWRALELAHLKSFVAGLQLGLLHEVTEGGDNLSIGQRQLLCLGRAVLRKSKILVLDEATAAVDLETDSLIQTTIRNEFSQCTVITIAHRLHTIMDSDKIMVLDSGKIVEYGSPEELLSNMGPFYLMAKEAGIESVNHTEL.

The Extracellular segment spans residues 1–26 (MDEFCNSTFWNLSLLKSPEADLPLCF). Residues Asn-6 and Asn-11 are each glycosylated (N-linked (GlcNAc...) asparagine). A helical membrane pass occupies residues 27-47 (EQTVLVWIPLGFLWLLAPWQL). The Cytoplasmic portion of the chain corresponds to 48–67 (YRIYRSRTKRFAITKFYLAK). A helical transmembrane segment spans residues 68 to 88 (QVFVVCLLILAAIDLSLALTE). Residues 89 to 92 (DTGQ) are Extracellular-facing. Residues 93-113 (ATIPPVKYTNPILYLCTWLLV) form a helical membrane-spanning segment. Over 114–125 (LVIQHCRQCCIQ) the chain is Cytoplasmic. The helical transmembrane segment at 126 to 146 (KNSWFLSMFWILSLLCGIFQF) threads the bilayer. Over 147-164 (QTLIRALLQDSKSNMTYS) the chain is Extracellular. Asn-160 is a glycosylation site (N-linked (GlcNAc...) asparagine). The chain crosses the membrane as a helical span at residues 165-185 (CLFFVSYGFQIVILILSAFSE). The Cytoplasmic portion of the chain corresponds to 186 to 311 (SSDSTHAPSA…DFPKSWLVKA (126 aa)). Residues 260 to 285 (LKKSQQSPEGTSHGLTKKQSQSQDVL) are disordered. A compositionally biased stretch (polar residues) spans 263–283 (SQQSPEGTSHGLTKKQSQSQD). Ser-279 and Ser-281 each carry phosphoserine. Residues 312–332 (LFKTFYVVILKSFILKLAHDI) traverse the membrane as a helical segment. Residues 320-603 (ILKSFILKLA…LPMVISSVIQ (284 aa)) enclose the ABC transmembrane type-1 1 domain. Residues 333-358 (LLFLNPQLLKFLIGFVKDPDSYPWVG) are Extracellular-facing. The chain crosses the membrane as a helical span at residues 359–379 (YIYAILMFSVTLIQSFFLQCY). The Cytoplasmic segment spans residues 380 to 435 (FQFCFVLGMTVRTTIIASVYKKALTLSNLARRQYTIGETVNLMSVDSQKLMDVTNY). Residues 436 to 456 (IHLLWSSVLQIALSIFFLWRE) traverse the membrane as a helical segment. Residues 457-459 (LGP) are Extracellular-facing. Residues 460–480 (SILAGVGLMVLLVPVNGVLAT) traverse the membrane as a helical segment. Topologically, residues 481-542 (KIRKIQVQNM…NLLRFSQLQT (62 aa)) are cytoplasmic. A helical transmembrane segment spans residues 543–563 (ILIFILHLTPTLVSVITFSVY). The Extracellular segment spans residues 564 to 585 (VLVDSQNVLNAEKAFTSITLFN). The helical transmembrane segment at 586–606 (ILRFPLAMLPMVISSVIQASV) threads the bilayer. Topologically, residues 607–969 (SVDRLEQYLG…VKFSIYLKYL (363 aa)) are cytoplasmic. Positions 635–859 (VQFSEASFTW…KGVFAKNWKT (225 aa)) constitute an ABC transporter 1 domain. 669 to 676 (GTVGSGKS) is an ATP binding site. Ser-876 is modified (phosphoserine). The interval 903–927 (RENSLRRTLSRSSRSGSRRGKSLKS) is disordered. Over residues 908–917 (RRTLSRSSRS) the composition is skewed to low complexity. Phosphoserine occurs at positions 924 and 928. The chain crosses the membrane as a helical span at residues 970-990 (QAVGWWSLLFIVIFYVLNYVA). Positions 977 to 1262 (LLFIVIFYVL…LVRMTSEVET (286 aa)) constitute an ABC transmembrane type-1 2 domain. Residues 991–1031 (FIGTNLWLSAWTSDSEKQNGTDNSPSQRDMRIGVFGALGIA) lie on the Extracellular side of the membrane. Residue Asn-1009 is glycosylated (N-linked (GlcNAc...) asparagine). Residues 1032 to 1052 (QGIFLLSSSLWSIYACRNASK) traverse the membrane as a helical segment. The Cytoplasmic segment spans residues 1053–1095 (TLHRQLLTNILRAPMSFFDTTPTGRIVNRFAGDISTVDDTLPQ). A helical membrane pass occupies residues 1096-1116 (TLRSWLLCFFGIVSTLVMICM). A topological domain (extracellular) is located at residue Ala-1117. A helical membrane pass occupies residues 1118–1138 (TPIFIIIIIPLSILYVSVQVF). Residues 1139-1209 (YVATSRQLRR…TSNRWLAIRL (71 aa)) are Cytoplasmic-facing. The chain crosses the membrane as a helical span at residues 1210-1230 (ELVGNLIVFCSALLLVIYKNS). Residues 1231–1232 (LT) are Extracellular-facing. A helical transmembrane segment spans residues 1233-1253 (GDTVGFVLSNALNITQTLNWL). Residues 1254–1543 (VRMTSEVETN…GIESVNHTEL (290 aa)) lie on the Cytoplasmic side of the membrane. Positions 1298–1532 (IQFNNYQVRY…MGPFYLMAKE (235 aa)) constitute an ABC transporter 2 domain. Residue 1332 to 1339 (GRTGAGKS) participates in ATP binding. A Phosphoserine modification is found at Ser-1436.

This sequence belongs to the ABC transporter superfamily. ABCC family. Conjugate transporter (TC 3.A.1.208) subfamily. In terms of tissue distribution, expressed in liver.

It localises to the apical cell membrane. It catalyses the reaction an S-substituted glutathione(in) + ATP + H2O = an S-substituted glutathione(out) + ADP + phosphate + H(+). The enzyme catalyses taurolithocholate 3-sulfate(in) + ATP + H2O = taurolithocholate 3-sulfate(out) + ADP + phosphate + H(+). It carries out the reaction ATP + H2O + xenobioticSide 1 = ADP + phosphate + xenobioticSide 2.. The catalysed reaction is leukotriene C4(in) + ATP + H2O = leukotriene C4(out) + ADP + phosphate + H(+). It catalyses the reaction 17beta-estradiol 17-O-(beta-D-glucuronate)(in) + ATP + H2O = 17beta-estradiol 17-O-(beta-D-glucuronate)(out) + ADP + phosphate + H(+). The enzyme catalyses (4Z,15Z)-bilirubin IXalpha C8-beta-D-glucuronoside(in) + ATP + H2O = (4Z,15Z)-bilirubin IXalpha C8-beta-D-glucuronoside(out) + ADP + phosphate + H(+). It carries out the reaction (4Z,15Z)-bilirubin IXalpha C8,C12-beta-D-bisglucuronoside(in) + ATP + H2O = (4Z,15Z)-bilirubin IXalpha C8,C12-beta-D-bisglucuronoside(out) + ADP + phosphate + H(+). In terms of biological role, ATP-dependent transporter of the ATP-binding cassette (ABC) family that binds and hydrolyzes ATP to enable active transport of various substrates including many drugs, toxicants and endogenous compound across cell membranes. Transports a wide variety of conjugated organic anions such as sulfate-, glucuronide- and glutathione (GSH)-conjugates of endo- and xenobiotics substrates. Mediates hepatobiliary excretion of mono- and bis-glucuronidated bilirubin molecules and therefore play an important role in bilirubin detoxification. Mediates also hepatobiliary excretion of others glucuronide conjugates such as 17beta-estradiol 17-glucosiduronic acid and leukotriene C4. Transports sulfated bile salt such as taurolithocholate sulfate. Transports various anticancer drugs, such as anthracycline, vinca alkaloid and methotrexate and HIV-drugs such as protease inhibitors. The chain is ATP-binding cassette sub-family C member 2 from Mus musculus (Mouse).